A 255-amino-acid polypeptide reads, in one-letter code: Type III pantothenate kinase (255 aa).

Residue 6–13 (DVGNTNIV) coordinates ATP. Residues Tyr100 and 107–110 (GADR) contribute to the substrate site. Asp109 functions as the Proton acceptor in the catalytic mechanism. Residue Asp129 participates in K(+) binding. Residue Thr132 coordinates ATP. Thr184 is a binding site for substrate.

Belongs to the type III pantothenate kinase family. Homodimer. The cofactor is NH4(+). K(+) is required as a cofactor.

The protein localises to the cytoplasm. It catalyses the reaction (R)-pantothenate + ATP = (R)-4'-phosphopantothenate + ADP + H(+). It functions in the pathway cofactor biosynthesis; coenzyme A biosynthesis; CoA from (R)-pantothenate: step 1/5. Functionally, catalyzes the phosphorylation of pantothenate (Pan), the first step in CoA biosynthesis. The polypeptide is Type III pantothenate kinase (Thermoanaerobacter sp. (strain X514)).